Reading from the N-terminus, the 346-residue chain is uncharacterized protein (346 aa).

The chain crosses the membrane as a helical span at residues Ala7–Val27. Residues Glu29–Lys48 are disordered. Residues Ser35–Ala44 show a composition bias toward polar residues. In terms of domain architecture, SCP spans Leu231–Phe342.

The protein localises to the cell membrane. This is an uncharacterized protein from Bacillus subtilis (strain 168).